We begin with the raw amino-acid sequence, 314 residues long: Lipoyl synthase (314 aa).

7 residues coordinate [4Fe-4S] cluster: Cys67, Cys72, Cys78, Cys93, Cys97, Cys100, and Ser306. One can recognise a Radical SAM core domain in the interval 79–295 (FNRGTATFMI…KNYALSIGFK (217 aa)).

Belongs to the radical SAM superfamily. Lipoyl synthase family. It depends on [4Fe-4S] cluster as a cofactor.

It localises to the cytoplasm. The catalysed reaction is [[Fe-S] cluster scaffold protein carrying a second [4Fe-4S](2+) cluster] + N(6)-octanoyl-L-lysyl-[protein] + 2 oxidized [2Fe-2S]-[ferredoxin] + 2 S-adenosyl-L-methionine + 4 H(+) = [[Fe-S] cluster scaffold protein] + N(6)-[(R)-dihydrolipoyl]-L-lysyl-[protein] + 4 Fe(3+) + 2 hydrogen sulfide + 2 5'-deoxyadenosine + 2 L-methionine + 2 reduced [2Fe-2S]-[ferredoxin]. It functions in the pathway protein modification; protein lipoylation via endogenous pathway; protein N(6)-(lipoyl)lysine from octanoyl-[acyl-carrier-protein]: step 2/2. In terms of biological role, catalyzes the radical-mediated insertion of two sulfur atoms into the C-6 and C-8 positions of the octanoyl moiety bound to the lipoyl domains of lipoate-dependent enzymes, thereby converting the octanoylated domains into lipoylated derivatives. The chain is Lipoyl synthase from Buchnera aphidicola subsp. Baizongia pistaciae (strain Bp).